The primary structure comprises 380 residues: Succinate--CoA ligase [ADP-forming] subunit beta 2 (380 aa).

In terms of domain architecture, ATP-grasp spans 9 to 235; sequence KQIFSKHGIR…YTEADQMERI (227 aa). ATP is bound by residues lysine 45, 52–54, glutamate 91, isoleucine 94, and glutamate 99; that span reads GRG. Asparagine 191 and aspartate 204 together coordinate Mg(2+). Substrate contacts are provided by residues asparagine 255 and 312–314; that span reads GIT.

This sequence belongs to the succinate/malate CoA ligase beta subunit family. As to quaternary structure, heterotetramer of two alpha and two beta subunits. Mg(2+) is required as a cofactor.

It catalyses the reaction succinate + ATP + CoA = succinyl-CoA + ADP + phosphate. It carries out the reaction GTP + succinate + CoA = succinyl-CoA + GDP + phosphate. It functions in the pathway carbohydrate metabolism; tricarboxylic acid cycle; succinate from succinyl-CoA (ligase route): step 1/1. Functionally, succinyl-CoA synthetase functions in the citric acid cycle (TCA), coupling the hydrolysis of succinyl-CoA to the synthesis of either ATP or GTP and thus represents the only step of substrate-level phosphorylation in the TCA. The beta subunit provides nucleotide specificity of the enzyme and binds the substrate succinate, while the binding sites for coenzyme A and phosphate are found in the alpha subunit. In Archaeoglobus fulgidus (strain ATCC 49558 / DSM 4304 / JCM 9628 / NBRC 100126 / VC-16), this protein is Succinate--CoA ligase [ADP-forming] subunit beta 2.